A 35-amino-acid polypeptide reads, in one-letter code: Manganese peroxidase (35 aa).

Positions 1–11 (LSLLGHDERVT) are enriched in basic and acidic residues. The tract at residues 1 to 35 (LSLLGHDERVTPEPFDSVTAQNARGNQADVQSLPR) is disordered. The span at 18–35 (VTAQNARGNQADVQSLPR) shows a compositional bias: polar residues.

This sequence belongs to the peroxidase family. Heme b serves as cofactor. Requires Ca(2+) as cofactor.

The catalysed reaction is 2 Mn(2+) + H2O2 + 2 H(+) = 2 Mn(3+) + 2 H2O. Has manganese peroxidase activity. The sequence is that of Manganese peroxidase from Irpex lacteus (Milk-white toothed polypore).